Here is a 307-residue protein sequence, read N- to C-terminus: HPr kinase/phosphorylase (307 aa).

Catalysis depends on residues His136 and Lys157. An ATP-binding site is contributed by 151-158 (GESGIGKS). Ser158 is a Mg(2+) binding site. Asp175 acts as the Proton acceptor; for phosphorylation activity. Proton donor; for dephosphorylation activity in catalysis. Residues 198 to 207 (LEVRGMGIID) form an important for the catalytic mechanism of both phosphorylation and dephosphorylation region. Glu199 contacts Mg(2+). Arg240 is a catalytic residue. The interval 261 to 266 (PIRPGR) is important for the catalytic mechanism of dephosphorylation.

Belongs to the HPrK/P family. As to quaternary structure, homohexamer. Mg(2+) serves as cofactor.

It catalyses the reaction [HPr protein]-L-serine + ATP = [HPr protein]-O-phospho-L-serine + ADP + H(+). It carries out the reaction [HPr protein]-O-phospho-L-serine + phosphate + H(+) = [HPr protein]-L-serine + diphosphate. Its function is as follows. Catalyzes the ATP- as well as the pyrophosphate-dependent phosphorylation of a specific serine residue in HPr, a phosphocarrier protein of the phosphoenolpyruvate-dependent sugar phosphotransferase system (PTS). HprK/P also catalyzes the pyrophosphate-producing, inorganic phosphate-dependent dephosphorylation (phosphorolysis) of seryl-phosphorylated HPr (P-Ser-HPr). The two antagonistic activities of HprK/P are regulated by several intracellular metabolites, which change their concentration in response to the absence or presence of rapidly metabolisable carbon sources (glucose, fructose, etc.) in the growth medium. Therefore, by controlling the phosphorylation state of HPr, HPrK/P is a sensor enzyme that plays a major role in the regulation of carbon metabolism and sugar transport: it mediates carbon catabolite repression (CCR), and regulates PTS-catalyzed carbohydrate uptake and inducer exclusion. This Clostridium perfringens (strain ATCC 13124 / DSM 756 / JCM 1290 / NCIMB 6125 / NCTC 8237 / Type A) protein is HPr kinase/phosphorylase.